A 246-amino-acid chain; its full sequence is MQATIYDLDGNTDGEVDLPDVFETPVRSDLIGKAVRAAQANRKQDYGSDEYAGLRTPAESFGSGRGQAHVPKQDGRARRVPQAVKGRSAHPPKTEKDRSLDLNDKERQLAVRSALAATADADLVADRGHEFDRDEVPVVVSDDFEDLVKTQEVVSLLEALDVHADIDRADETKIKAGQGSARGRKYRRPASILFVTSDEPSTAARNLAGADVATASEVNTEDLAPGGAPGRLTVFTESALAEVAER.

A disordered region spans residues 37–103 (AAQANRKQDY…TEKDRSLDLN (67 aa)). Over residues 92–103 (PKTEKDRSLDLN) the composition is skewed to basic and acidic residues.

This sequence belongs to the universal ribosomal protein uL4 family. In terms of assembly, part of the 50S ribosomal subunit. Interacts weakly with proteins L18e, L24 and L37e. Has been cross-linked to L18e.

Its function is as follows. One of the primary rRNA binding proteins, this protein initially binds near the 5'-end of the 23S rRNA. It is important during the early stages of 50S assembly. Functionally, makes multiple contacts with different domains of the 23S rRNA in the assembled 50S subunit. In terms of biological role, forms part of the polypeptide exit tunnel, in which it helps forms a bend with protein L22. Contacts the macrolide antibiotic spiramycin in the polypeptide exit tunnel. In Haloarcula marismortui (strain ATCC 43049 / DSM 3752 / JCM 8966 / VKM B-1809) (Halobacterium marismortui), this protein is Large ribosomal subunit protein uL4 (rpl4).